The chain runs to 520 residues: MMISCKKLFVFRQLPAVRRCLAAAAFSTPRATSYRILSSAGSGSTRADAPQVRRLHTTRDLLAKDYYATLGVAKNANGKDIKKAYYQLAKKYHPDTNKEDPDAGRKFQEVSEAYEVLSDEQKRREYDTYGQTAENIGRQGGGFPGGGAGGFGPEGFSQSWQFRSSIDPEELFRKIFGEGNFRTNSFDDFADSKFGFGQAQEMVMDLTFAQAARGVNKDVNVNVVDQCPKCAGTKCEPGTKPGRCQYCNGTGFETVSTGPFVMRSTCRYCQGTRQHIKYPCSECEGKGRTVQRRKVTVPVPAGIENGQTVRMQVGSKELFVTFRVERSDYFRREGADVHTDAAISLAQAVLGGTVRVQGVYEDQWINVEPGTSSHHKIMLRGKGLKRVNAHGHGDHYVHVKITVPSAKKLDKKRLALIEAYAELEEDTPGQIHGIANRKDGSKQATAGASEEPGAGAAAKASAAAAGSGASKPGPGAEESEGKDQWTDNKKTKAKEGGGSGSGQGDGGGGGFISKIKSMFN.

The N-terminal 62 residues, 1 to 62, are a transit peptide targeting the mitochondrion; it reads MMISCKKLFV…RRLHTTRDLL (62 aa). The residue at position 30 (R30) is an Omega-N-methylarginine. The J domain occupies 65 to 130; the sequence is DYYATLGVAK…QKRREYDTYG (66 aa). Position 106 is an N6-acetyllysine (K106). The segment at 214–292 adopts a CR-type zinc-finger fold; the sequence is GVNKDVNVNV…CEGKGRTVQR (79 aa). Residues C227, C230, C244, C247, C266, C269, C280, and C283 each coordinate Zn(2+). One copy of the CXXCXGXG motif; approximate repeat lies at 227 to 234; the sequence is CPKCAGTK. Residues 244 to 251 form a CXXCXGXG motif repeat; that stretch reads CQYCNGTG. Residues 266–273 form a CXXCXGXG motif; approximate repeat; the sequence is CRYCQGTR. One copy of the CXXCXGXG motif repeat lies at 280 to 287; sequence CSECEGKG. The disordered stretch occupies residues 430–520; it reads QIHGIANRKD…FISKIKSMFN (91 aa). Over residues 446–476 the composition is skewed to low complexity; it reads AGASEEPGAGAAAKASAAAAGSGASKPGPGA. Over residues 479-495 the composition is skewed to basic and acidic residues; that stretch reads SEGKDQWTDNKKTKAKE. Residues 496–511 are compositionally biased toward gly residues; sequence GGGSGSGQGDGGGGGF.

Interacts with ptc (via C-terminal cytoplasmic region); the interaction is probably direct. Interacts with hh/hedgehog; the interaction is probably mediated by the hedgehog receptor ptc. In terms of processing, appears to produce proteins of differing size. Predicted to have a molecular mass of 56 kDa (TID56) however proteins of 50 kDa, 47 kDa and 40 kDa have been identified and named TID50, TID47 and TID40. TID50 and TID40 localize to the mitochondria while TID47 localizes to the cytoplasm. TID50 is probably TID56 that has undergone mitochondrial transit peptide processing. TID40 and TID47 may be alternately processed proteins or may be isoforms resulting from alternative splicing. As to expression, ubiquitously expressed throughout embryonic development. In larvae, expression is seen in sensory organs, gopplet cells, gonads, imaginal disks, proventriculus, fat body, hematopoietic organ, midgut, Malpighian tubules and ring gland.

The protein localises to the cytoplasm. It localises to the cytosol. Its subcellular location is the mitochondrion. The protein resides in the mitochondrion outer membrane. Functionally, involved in hh/hedgehog signaling. May act as a tumor suppressor in larval imaginal disks. The protein is DnaJ homolog l(2)tid, mitochondrial of Drosophila melanogaster (Fruit fly).